The sequence spans 835 residues: Leucine--tRNA ligase (835 aa).

The short motif at 36 to 46 (PYPSGKIHVGH) is the 'HIGH' region element. Positions 602–606 (KMSKS) match the 'KMSKS' region motif. Lys-605 lines the ATP pocket.

This sequence belongs to the class-I aminoacyl-tRNA synthetase family.

It localises to the cytoplasm. It catalyses the reaction tRNA(Leu) + L-leucine + ATP = L-leucyl-tRNA(Leu) + AMP + diphosphate. The chain is Leucine--tRNA ligase from Rickettsia felis (strain ATCC VR-1525 / URRWXCal2) (Rickettsia azadi).